The primary structure comprises 166 residues: Large ribosomal subunit protein uL10 (166 aa).

Belongs to the universal ribosomal protein uL10 family. As to quaternary structure, part of the ribosomal stalk of the 50S ribosomal subunit. The N-terminus interacts with L11 and the large rRNA to form the base of the stalk. The C-terminus forms an elongated spine to which L12 dimers bind in a sequential fashion forming a multimeric L10(L12)X complex.

Forms part of the ribosomal stalk, playing a central role in the interaction of the ribosome with GTP-bound translation factors. This is Large ribosomal subunit protein uL10 from Pseudomonas putida (strain W619).